The sequence spans 66 residues: UPF0150 protein AF_0072.1 (66 aa).

This sequence belongs to the UPF0150 family.

In Archaeoglobus fulgidus (strain ATCC 49558 / DSM 4304 / JCM 9628 / NBRC 100126 / VC-16), this protein is UPF0150 protein AF_0072.1.